Consider the following 1888-residue polypeptide: Tensin-1 (1888 aa).

Residues 21–31 show a composition bias toward pro residues; sequence PQPPGTPPGPA. A disordered region spans residues 21-45; that stretch reads PQPPGTPPGPARPERCEPGGAAPDP. The Phorbol-ester/DAG-type zinc finger occupies 61–108; sequence THHFKVKAFKKVKPCGICRQAITREGCVCKVCSFSCHRKCQAKVAAPC. The segment at 132–174 is disordered; that stretch reads GEGDCRVGSSPKNLEEGGSMRVSPSIQPQPQSQPTSLSRNTSV. The span at 154 to 167 shows a compositional bias: low complexity; that stretch reads SPSIQPQPQSQPTS. The region spanning 175–347 is the Phosphatase tensin-type domain; that stretch reads SRAMEDSCEL…HYFSGLLSGS (173 aa). The 127-residue stretch at 352-478 folds into the C2 tensin-type domain; it reads NKPLFLHHVI…GKVEFVFSYG (127 aa). A phosphoserine mark is found at Ser509 and Ser535. At Tyr537 the chain carries Phosphotyrosine. Disordered stretches follow at residues 543 to 608, 696 to 722, and 789 to 854; these read KDSL…PQEK, VTNTSESGYPETLSPLTNGLDKPYSTE, and RSQS…SAET. Ser549 carries the phosphoserine modification. Residues 571 to 584 are compositionally biased toward polar residues; it reads LSVSSDSGNSTAST. Ser604 carries the post-translational modification Phosphoserine. Ser792 carries the post-translational modification Phosphoserine. Positions 835-852 are enriched in polar residues; that stretch reads RSPLQSLARSKPSPQLSA. Ser867 is modified (phosphoserine). Disordered regions lie at residues 893 to 1077 and 1109 to 1555; these read PLHK…RSPV and EEME…AGSL. The segment covering 905–922 has biased composition (low complexity); it reads PGASPLSSQPLLGSSRQS. Phosphoserine occurs at positions 930, 935, and 952. Residues 962–986 are compositionally biased toward polar residues; sequence GSNQSFHPKSPASSTFLPSPHSSAG. Residue Thr1015 is modified to Phosphothreonine. Ser1054 is modified (phosphoserine). Residues 1057–1069 show a composition bias toward polar residues; the sequence is QYENQSPEATSPR. A Phosphotyrosine modification is found at Tyr1058. 3 positions are modified to phosphoserine: Ser1062, Ser1118, and Ser1122. The segment covering 1169 to 1179 has biased composition (basic and acidic residues); it reads EVTKPPEEPRS. Low complexity predominate over residues 1227-1239; that stretch reads SPSPLSTSSPILS. A compositionally biased stretch (polar residues) spans 1240–1257; it reads ADSTSVGSFPSVVSSDQG. Ser1279 carries the post-translational modification Phosphoserine. A compositionally biased stretch (low complexity) spans 1284–1300; it reads SYQSSSPVPVGGSSYNS. The span at 1301–1322 shows a compositional bias: polar residues; sequence PDYSLQPFSSSPESQGQPQYSA. A glycan (O-linked (GalNAc...) serine) is linked at Ser1321. Ser1331 is subject to Phosphoserine. Thr1343 bears the Phosphothreonine mark. A Phosphoserine modification is found at Ser1346. Thr1420 carries the post-translational modification Phosphothreonine. Ser1423 carries the phosphoserine modification. Residues 1436 to 1446 are compositionally biased toward polar residues; it reads NLASSLHSNAV. Ser1448, Ser1463, and Ser1468 each carry phosphoserine. Polar residues predominate over residues 1490 to 1507; it reads LSRQSSASGYQAPSTPSF. The segment covering 1518–1530 has biased composition (low complexity); that stretch reads SSPATSPSPDSAA. Ser1535, Ser1547, Ser1554, and Ser1599 each carry phosphoserine. One can recognise an SH2 domain in the interval 1616–1725; it reads WYKPEISREQ…ALPCKLVIPS (110 aa). Phosphoserine is present on Ser1741. One can recognise a PTB domain in the interval 1751 to 1885; sequence ACNVLFVNSV…FVSKVMLSAG (135 aa).

This sequence belongs to the PTEN phosphatase protein family. Binds to actin filaments and interacts with phosphotyrosine-containing proteins. Interacts with STARD8. Interacts with protein phosphatase PPP1CA. Interacts (via N-terminus) with Rho GTPase-activating protein DLC1; the interaction is decreased by phosphorylation of TNS1. Interacts with tyrosine-phosphorylated proteins BCAR1/p130Cas and PTK2/FAK; the interactions are increased by phosphorylation of TNS1. In terms of processing, extensively phosphorylated on serine and threonine residues in a p38 MAPK-dependent manner which reduces interaction with DLC1 and increases interaction with tyrosine-phosphorylated proteins including BCAR1/p130cas and PTK2/FAK. The majority of the phosphorylated Ser/Thr residues are immediately adjacent to a proline residue. Also phosphorylated on tyrosine residues. Post-translationally, rapidly cleaved by calpain II.

It localises to the cell surface. The protein resides in the cell junction. Its subcellular location is the focal adhesion. It is found in the cytoplasm. The protein localises to the cytoskeleton. In terms of biological role, may act as a protein phosphatase and/or a lipid phosphatase. Involved in fibrillar adhesion formation. Essential for myofibroblast differentiation and myofibroblast-mediated extracellular matrix deposition. Enhances RHOA activation in the presence of DLC1. Plays a role in cell polarization and migration. May be involved in cartilage development and in linking signal transduction pathways to the cytoskeleton. This is Tensin-1 from Mus musculus (Mouse).